Reading from the N-terminus, the 80-residue chain is Raniseptin-2 (80 aa).

The N-terminal stretch at 1–22 is a signal peptide; the sequence is MAFLKKSLFLVLFLGIVSLSIC. The propeptide occupies 23 to 49; that stretch reads EEEKRVGEEEEKQEEENEELSEEELRE. A disordered region spans residues 27–46; it reads RVGEEEEKQEEENEELSEEE. Over residues 30 to 44 the composition is skewed to acidic residues; it reads EEEEKQEEENEELSE.

It belongs to the frog skin active peptide (FSAP) family. Dermaseptin subfamily. Expressed by the skin glands.

The protein resides in the secreted. Functionally, has antibacterial activity. The sequence is that of Raniseptin-2 from Boana raniceps (Chaco tree frog).